Reading from the N-terminus, the 512-residue chain is Gasdermin-E (512 aa).

The membrane targeting domain stretch occupies residues 1 to 56; the sequence is MFAKATRNFLKEVDAGGDLISVSHLNDSDKLQLLSLVTKKKRYWCWQRPKYQILSA. Cys-45 carries the post-translational modification S-(2-succinyl)cysteine. Residue Lys-120 forms a Glycyl lysine isopeptide (Lys-Gly) (interchain with G-Cter in ubiquitin) linkage. S-(2-succinyl)cysteine is present on residues Cys-156, Cys-168, and Cys-180. Lys-189 participates in a covalent cross-link: Glycyl lysine isopeptide (Lys-Gly) (interchain with G-Cter in ubiquitin). Cys-235, Cys-411, and Cys-420 each carry S-(2-succinyl)cysteine.

The protein belongs to the gasdermin family. Homooligomer; homooligomeric ring-shaped pore complex containing 27-28 subunits when inserted in the membrane. Post-translationally, cleavage at Asp-270 by CASP3 (mature and uncleaved precursor forms) or granzyme B (GZMB) relieves autoinhibition and is sufficient to initiate pyroptosis. Succination by the Krebs cycle intermediate fumarate, which leads to S-(2-succinyl)cysteine residues, inhibits processing by caspases, and ability to initiate pyroptosis. Succination modification is catalyzed by a non-enzymatic reaction caused by an accumulation of fumarate. In terms of processing, ubiquitinated on Lys-120 and Lys-189 via 'Lys-48'-linked polyubiquitin chains, leading to proteasomal degradation. Deubiquitinated by USP48, leading to increased stability. Post-translationally, palmitoylated. Expressed in spleen, kidney, large and small intestine, testicle, stomach and by CD4(+)CD(8+) T cells in thymus. Expressed by macrophages.

It localises to the cell membrane. It is found in the cytoplasm. The protein resides in the cytosol. Its activity is regulated as follows. The full-length protein before cleavage is inactive: intramolecular interactions between N- and C-terminal domains mediate autoinhibition in the absence of activation signal. The intrinsic pyroptosis-inducing activity is carried by the released N-terminal moiety (Gasdermin-E, N-terminal) following cleavage by CASP3 or granzyme B (GZMB). Activated by NLRP1 in the absence of GSDMD expression: NLRP1 cleaves and activates CASP8, promoting downstream activation of CASP3 and subsequent activation of GSDME. Its function is as follows. Precursor of a pore-forming protein that converts non-inflammatory apoptosis to pyroptosis. This form constitutes the precursor of the pore-forming protein: upon cleavage, the released N-terminal moiety (Gasdermin-E, N-terminal) binds to membranes and forms pores, triggering pyroptosis. In terms of biological role, pore-forming protein produced by cleavage by CASP3 or granzyme B (GZMB), which converts non-inflammatory apoptosis to pyroptosis or promotes granzyme-mediated pyroptosis, respectively. After cleavage, moves to the plasma membrane, homooligomerizes within the membrane and forms pores of 10-15 nanometers (nm) of inner diameter, allowing the release of mature interleukins (IL1B and IL16) and triggering pyroptosis. Binds to inner leaflet lipids, bisphosphorylated phosphatidylinositols, such as phosphatidylinositol (4,5)-bisphosphate. Cleavage by CASP3 switches CASP3-mediated apoptosis induced by TNF or danger signals, such as chemotherapy drugs, to pyroptosis. Mediates secondary necrosis downstream of the mitochondrial apoptotic pathway and CASP3 activation as well as in response to viral agents. Exhibits bactericidal activity. Cleavage by GZMB promotes tumor suppressor activity by triggering robust anti-tumor immunity. Suppresses tumors by mediating granzyme-mediated pyroptosis in target cells of natural killer (NK) cells: cleavage by granzyme B (GZMB), delivered to target cells from NK-cells, triggers pyroptosis of tumor cells and tumor suppression. May play a role in the p53/TP53-regulated cellular response to DNA damage. The chain is Gasdermin-E from Mus musculus (Mouse).